Here is a 112-residue protein sequence, read N- to C-terminus: C-C motif chemokine 27 (112 aa).

An N-terminal signal peptide occupies residues 1–24 (MKGPPTFCSLLLLSLLLSPDPTAA). Disulfide bonds link cysteine 33-cysteine 62 and cysteine 34-cysteine 77.

It belongs to the intercrine beta (chemokine CC) family. In terms of assembly, monomer, dimer, and tetramer. Heparin avidly promotes oligomerization. Interacts with TNFAIP6 (via Link domain). Testis, thymus, placenta, ovary and skin.

The protein resides in the secreted. Functionally, chemotactic factor that attracts skin-associated memory T-lymphocytes. May play a role in mediating homing of lymphocytes to cutaneous sites. Binds to CCR10. The chain is C-C motif chemokine 27 (CCL27) from Homo sapiens (Human).